The sequence spans 116 residues: Class I hydrophobin 1 (116 aa).

The first 19 residues, 1-19 (MLFKQAILVATTLTTLAVA), serve as a signal peptide directing secretion. 4 cysteine pairs are disulfide-bonded: Cys-35–Cys-95, Cys-42–Cys-89, Cys-43–Cys-76, and Cys-96–Cys-109. Residues Asn-44 and Asn-100 are each glycosylated (N-linked (GlcNAc...) asparagine).

Belongs to the fungal hydrophobin family. In terms of assembly, self-assembles to form functional amyloid fibrils called rodlets. Self-assembly into fibrillar rodlets occurs spontaneously at hydrophobic:hydrophilic interfaces and the rodlets further associate laterally to form amphipathic monolayers.

The protein resides in the secreted. It is found in the cell wall. Aerial growth, conidiation, and dispersal of filamentous fungi in the environment rely upon a capability of their secreting small amphipathic proteins called hydrophobins (HPBs) with low sequence identity. Class I can self-assemble into an outermost layer of rodlet bundles on aerial cell surfaces, conferring cellular hydrophobicity that supports fungal growth, development and dispersal; whereas Class II form highly ordered films at water-air interfaces through intermolecular interactions but contribute nothing to the rodlet structure. This chain is Class I hydrophobin 1, found in Pleurotus ostreatus (strain PC15) (Oyster mushroom).